A 658-amino-acid polypeptide reads, in one-letter code: Threonine--tRNA ligase (658 aa).

Residues 1–64 (MSNTVSLQFP…GASGKVEIIT (64 aa)) form the TGS domain. Residues 246-548 (DHRRLGREMD…LIENFAGHMP (303 aa)) are catalytic. Zn(2+)-binding residues include C343, H394, and H525.

The protein belongs to the class-II aminoacyl-tRNA synthetase family. In terms of assembly, homodimer. Zn(2+) is required as a cofactor.

It is found in the cytoplasm. It catalyses the reaction tRNA(Thr) + L-threonine + ATP = L-threonyl-tRNA(Thr) + AMP + diphosphate + H(+). Functionally, catalyzes the attachment of threonine to tRNA(Thr) in a two-step reaction: L-threonine is first activated by ATP to form Thr-AMP and then transferred to the acceptor end of tRNA(Thr). Also edits incorrectly charged L-seryl-tRNA(Thr). In Brucella melitensis biotype 2 (strain ATCC 23457), this protein is Threonine--tRNA ligase.